The primary structure comprises 546 residues: CTP synthase (546 aa).

The interval 1–266 is amidoligase domain; that stretch reads MTTNYIFVTG…DDLVCTRFGI (266 aa). S14 serves as a coordination point for CTP. Residue S14 participates in UTP binding. ATP-binding positions include 15–20 and D72; that span reads SLGKGI. D72 and E140 together coordinate Mg(2+). Residues 147 to 149, 187 to 192, and K223 contribute to the CTP site; these read DIE and KTKPTQ. Residues 187-192 and K223 each bind UTP; that span reads KTKPTQ. Residue 239–241 coordinates ATP; it reads KDV. A Glutamine amidotransferase type-1 domain is found at 291 to 542; that stretch reads TIGMVGKYIE…VKAAGQYSRG (252 aa). Position 352 (G352) interacts with L-glutamine. Residue C379 is the Nucleophile; for glutamine hydrolysis of the active site. Residues 380-383, E403, and R470 each bind L-glutamine; that span reads LGMQ. Active-site residues include H515 and E517.

It belongs to the CTP synthase family. Homotetramer.

The catalysed reaction is UTP + L-glutamine + ATP + H2O = CTP + L-glutamate + ADP + phosphate + 2 H(+). It carries out the reaction L-glutamine + H2O = L-glutamate + NH4(+). It catalyses the reaction UTP + NH4(+) + ATP = CTP + ADP + phosphate + 2 H(+). Its pathway is pyrimidine metabolism; CTP biosynthesis via de novo pathway; CTP from UDP: step 2/2. Its activity is regulated as follows. Allosterically activated by GTP, when glutamine is the substrate; GTP has no effect on the reaction when ammonia is the substrate. The allosteric effector GTP functions by stabilizing the protein conformation that binds the tetrahedral intermediate(s) formed during glutamine hydrolysis. Inhibited by the product CTP, via allosteric rather than competitive inhibition. In terms of biological role, catalyzes the ATP-dependent amination of UTP to CTP with either L-glutamine or ammonia as the source of nitrogen. Regulates intracellular CTP levels through interactions with the four ribonucleotide triphosphates. The polypeptide is CTP synthase (Vibrio parahaemolyticus serotype O3:K6 (strain RIMD 2210633)).